The primary structure comprises 620 residues: Chaperone protein HscA homolog (620 aa).

This sequence belongs to the heat shock protein 70 family.

Functionally, chaperone involved in the maturation of iron-sulfur cluster-containing proteins. Has a low intrinsic ATPase activity which is markedly stimulated by HscB. The chain is Chaperone protein HscA homolog from Shewanella putrefaciens (strain CN-32 / ATCC BAA-453).